We begin with the raw amino-acid sequence, 959 residues long: Autophagy-related protein 18g (959 aa).

WD repeat units follow at residues 376 to 416 (AHTS…SHNA) and 438 to 479 (ITSA…AAFQ). A disordered region spans residues 802-832 (GSIESAESSEEGSTKQMENLHDSDHMSNSIK).

This sequence belongs to the WD repeat PROPPIN family. As to quaternary structure, component of the PI(3,5)P2 regulatory complex at least composed of ATG18, SAC/FIG4, FAB1 and VAC14. In terms of tissue distribution, expressed in leaves.

Its subcellular location is the preautophagosomal structure membrane. It is found in the vacuole membrane. Functionally, the PI(3,5)P2 regulatory complex regulates both the synthesis and turnover of phosphatidylinositol 3,5-bisphosphate (PtdIns(3,5)P2). Required for autophagy. This is Autophagy-related protein 18g (ATG18G) from Arabidopsis thaliana (Mouse-ear cress).